A 286-amino-acid chain; its full sequence is 3-hydroxyanthranilate 3,4-dioxygenase (286 aa).

The interval 1-160 (MERPVRVKAW…SEQYRTGKPN (160 aa)) is domain A (catalytic). Position 43 (arginine 43) interacts with O2. Residues histidine 47, glutamate 53, and histidine 91 each coordinate Fe cation. Residue glutamate 53 participates in substrate binding. Positions 95 and 105 each coordinate substrate. A linker region spans residues 161 to 177 (PDQLLKEPPFPLSTRSV). A domain B region spans residues 178 to 286 (MEPMCLEAWL…QDPACKKSLG (109 aa)).

This sequence belongs to the 3-HAO family. In terms of assembly, monomer. It depends on Fe(2+) as a cofactor.

The protein resides in the cytoplasm. It localises to the cytosol. It catalyses the reaction 3-hydroxyanthranilate + O2 = (2Z,4Z)-2-amino-3-carboxymuconate 6-semialdehyde. It functions in the pathway cofactor biosynthesis; NAD(+) biosynthesis; quinolinate from L-kynurenine: step 3/3. In terms of biological role, catalyzes the oxidative ring opening of 3-hydroxyanthranilate to 2-amino-3-carboxymuconate semialdehyde, which spontaneously cyclizes to quinolinate. The sequence is that of 3-hydroxyanthranilate 3,4-dioxygenase from Bos taurus (Bovine).